Here is a 105-residue protein sequence, read N- to C-terminus: Signal peptidase complex subunit 1 (105 aa).

Residues 1-32 (MDGMIAMLPAPLQKLSSHIDFQGQKVAERTYQ) are Cytoplasmic-facing. A helical transmembrane segment spans residues 33–53 (VILTIAGIIGFLVGFWTQQLS). The Lumenal segment spans residues 54-56 (YAM). Residues 57–77 (FTVLGASAFTALIILPPWPFL) traverse the membrane as a helical segment. The Cytoplasmic portion of the chain corresponds to 78 to 105 (FRKNPIVWHTPAEPQESGDKKKETKKTK).

The protein belongs to the SPCS1 family. Component of the signal peptidase complex (SPC) composed of a catalytic subunit sec-11 and three accessory subunits spcs-1, spcs-2 and spcs-3. The complex induces a local thinning of the ER membrane which is used to measure the length of the signal peptide (SP) h-region of protein substrates. This ensures the selectivity of the complex towards h-regions shorter than 18-20 amino acids.

It localises to the endoplasmic reticulum membrane. In terms of biological role, component of the signal peptidase complex (SPC) which catalyzes the cleavage of N-terminal signal sequences from nascent proteins as they are translocated into the lumen of the endoplasmic reticulum. Dispensable for SPC enzymatic activity. This Caenorhabditis elegans protein is Signal peptidase complex subunit 1.